Here is a 298-residue protein sequence, read N- to C-terminus: uncharacterized protein (298 aa).

This is an uncharacterized protein from Acanthamoeba polyphaga mimivirus (APMV).